The chain runs to 165 residues: Type 3 secretion system regulator YopR (165 aa).

It belongs to the YopR family.

The protein localises to the secreted. May be involved in the regulation of the assembly of the type III secretion system (T3SS), also called injectisome, which is used to inject bacterial effector proteins into eukaryotic host cells. May control the secretion and/or polymerization of YscF/SctF, the principal component of the needle filament, thereby impacting the assembly of the T3SS. Involved in pathogenesis. This is Type 3 secretion system regulator YopR from Yersinia pestis.